The primary structure comprises 189 residues: UPF0398 protein LCK_00599 (189 aa).

This sequence belongs to the UPF0398 family.

In Leuconostoc citreum (strain KM20), this protein is UPF0398 protein LCK_00599.